The chain runs to 388 residues: Zinc finger C2H2 protein ECU10_0150 (388 aa).

Residues 299–322 (YKCGFCGKAFESEKFIFNHFNNKH) form a C2H2-type zinc finger.

The sequence is that of Zinc finger C2H2 protein ECU10_0150 from Encephalitozoon cuniculi (strain GB-M1) (Microsporidian parasite).